A 418-amino-acid polypeptide reads, in one-letter code: Histidine--tRNA ligase (418 aa).

It belongs to the class-II aminoacyl-tRNA synthetase family. In terms of assembly, homodimer.

It is found in the cytoplasm. The enzyme catalyses tRNA(His) + L-histidine + ATP = L-histidyl-tRNA(His) + AMP + diphosphate + H(+). The protein is Histidine--tRNA ligase of Dehalococcoides mccartyi (strain ATCC BAA-2100 / JCM 16839 / KCTC 5957 / BAV1).